Reading from the N-terminus, the 456-residue chain is Bestrophin homolog 18 (456 aa).

Helical transmembrane passes span 29–49, 83–103, 234–254, and 267–287; these read WSAI…VSAI, GFFI…IGFI, IIYP…GILA, and MIDL…MGWL. Residues 416-456 form a disordered region; that stretch reads ASSSRSLERQRSPGSFRMETLTPGSPTNTPIEPIDKIDKKK.

The protein belongs to the anion channel-forming bestrophin (TC 1.A.46) family. Calcium-sensitive chloride channel subfamily. Forms oligomers.

The protein localises to the cell membrane. Functionally, forms chloride channels. The sequence is that of Bestrophin homolog 18 (best-18) from Caenorhabditis elegans.